A 209-amino-acid polypeptide reads, in one-letter code: Protein-L-isoaspartate O-methyltransferase (209 aa).

Residue Ser-60 is part of the active site.

The protein belongs to the methyltransferase superfamily. L-isoaspartyl/D-aspartyl protein methyltransferase family.

The protein localises to the cytoplasm. The enzyme catalyses [protein]-L-isoaspartate + S-adenosyl-L-methionine = [protein]-L-isoaspartate alpha-methyl ester + S-adenosyl-L-homocysteine. Catalyzes the methyl esterification of L-isoaspartyl residues in peptides and proteins that result from spontaneous decomposition of normal L-aspartyl and L-asparaginyl residues. It plays a role in the repair and/or degradation of damaged proteins. The polypeptide is Protein-L-isoaspartate O-methyltransferase (Methanococcus vannielii (strain ATCC 35089 / DSM 1224 / JCM 13029 / OCM 148 / SB)).